Reading from the N-terminus, the 212-residue chain is Ribonuclease HII (212 aa).

The region spanning 20-209 (TCVVGVDEVG…VHNILYQEAS (190 aa)) is the RNase H type-2 domain. Asp26, Glu27, and Asp117 together coordinate a divalent metal cation.

It belongs to the RNase HII family. Mn(2+) is required as a cofactor. The cofactor is Mg(2+).

It localises to the cytoplasm. The catalysed reaction is Endonucleolytic cleavage to 5'-phosphomonoester.. In terms of biological role, endonuclease that specifically degrades the RNA of RNA-DNA hybrids. This chain is Ribonuclease HII, found in Cereibacter sphaeroides (strain ATCC 17029 / ATH 2.4.9) (Rhodobacter sphaeroides).